Reading from the N-terminus, the 305-residue chain is uncharacterized protein (305 aa).

A disordered region spans residues 255–305; sequence RCHRAGLRSPPRTREPLWSLGPSGGEAAGEAPGGKGPPTPVLPHARRAGAA. The span at 276–288 shows a compositional bias: gly residues; the sequence is PSGGEAAGEAPGG.

This is an uncharacterized protein from Streptomyces fradiae (Streptomyces roseoflavus).